A 78-amino-acid chain; its full sequence is Conotoxin ArMKLT2-0313 (78 aa).

An N-terminal signal peptide occupies residues 1–22 (MKLTCVLIIAVLCLTVCQLITA). Positions 23–47 (DYLRDKQKYRSVRLRDGMLNFKGSR) are excised as a propeptide. Glutamine 48 carries the post-translational modification Pyrrolidone carboxylic acid. Disulfide bonds link cysteine 49–cysteine 62, cysteine 56–cysteine 67, and cysteine 61–cysteine 75.

It belongs to the conotoxin O1 superfamily. As to expression, expressed by the venom duct.

Its subcellular location is the secreted. This is Conotoxin ArMKLT2-0313 from Conus arenatus (Sand-dusted cone).